Reading from the N-terminus, the 207-residue chain is LexA repressor (207 aa).

The segment at residues V28 to A48 is a DNA-binding region (H-T-H motif). Active-site for autocatalytic cleavage activity residues include S129 and K167.

This sequence belongs to the peptidase S24 family. As to quaternary structure, homodimer.

It carries out the reaction Hydrolysis of Ala-|-Gly bond in repressor LexA.. Functionally, represses a number of genes involved in the response to DNA damage (SOS response), including recA and lexA. In the presence of single-stranded DNA, RecA interacts with LexA causing an autocatalytic cleavage which disrupts the DNA-binding part of LexA, leading to derepression of the SOS regulon and eventually DNA repair. The chain is LexA repressor from Geobacillus sp. (strain WCH70).